We begin with the raw amino-acid sequence, 58 residues long: Small ribosomal subunit protein bS21 (58 aa).

The segment at 25 to 58 is disordered; that stretch reads KAGTLQEARKREHYEKPSVKRKRKSEAARKRKKI. Residues 31-42 are compositionally biased toward basic and acidic residues; it reads EARKREHYEKPS. Residues 43-58 are compositionally biased toward basic residues; that stretch reads VKRKRKSEAARKRKKI.

It belongs to the bacterial ribosomal protein bS21 family.

This is Small ribosomal subunit protein bS21 from Streptococcus thermophilus (strain ATCC BAA-491 / LMD-9).